The following is a 303-amino-acid chain: Deoxyhypusine hydroxylase (303 aa).

HEAT-like PBS-type repeat units follow at residues Leu-56–Asp-82 and Val-89–Asp-115. Positions 58, 91, and 92 each coordinate Fe cation. Positions Asp-139–Lys-158 are disordered. HEAT-like PBS-type repeat units lie at residues His-176 to Ile-202, Phe-207 to Arg-233, and Val-240 to Asp-266. Residues His-209, His-242, and Glu-243 each coordinate Fe cation.

Belongs to the deoxyhypusine hydroxylase family. It depends on Fe(2+) as a cofactor.

It catalyses the reaction [eIF5A protein]-deoxyhypusine + AH2 + O2 = [eIF5A protein]-hypusine + A + H2O. It functions in the pathway protein modification; eIF5A hypusination. Catalyzes the hydroxylation of the N(6)-(4-aminobutyl)-L-lysine intermediate produced by deoxyhypusine synthase/DHPS on a critical lysine of the eukaryotic translation initiation factor 5A/eIF-5A. This is the second step of the post-translational modification of that lysine into an unusual amino acid residue named hypusine. Hypusination is unique to mature eIF-5A factor and is essential for its function. The polypeptide is Deoxyhypusine hydroxylase (dohh) (Xenopus laevis (African clawed frog)).